We begin with the raw amino-acid sequence, 284 residues long: Shikimate dehydrogenase (NADP(+)) (284 aa).

Shikimate-binding positions include 20-22 (SIS) and serine 67. Lysine 71 acts as the Proton acceptor in catalysis. Positions 92 and 107 each coordinate shikimate. NADP(+)-binding positions include 129–133 (GAGGA) and valine 227. Tyrosine 229 lines the shikimate pocket. Glycine 250 provides a ligand contact to NADP(+).

This sequence belongs to the shikimate dehydrogenase family. In terms of assembly, homodimer.

The catalysed reaction is shikimate + NADP(+) = 3-dehydroshikimate + NADPH + H(+). It participates in metabolic intermediate biosynthesis; chorismate biosynthesis; chorismate from D-erythrose 4-phosphate and phosphoenolpyruvate: step 4/7. Its function is as follows. Involved in the biosynthesis of the chorismate, which leads to the biosynthesis of aromatic amino acids. Catalyzes the reversible NADPH linked reduction of 3-dehydroshikimate (DHSA) to yield shikimate (SA). This is Shikimate dehydrogenase (NADP(+)) from Streptococcus sanguinis (strain SK36).